Reading from the N-terminus, the 375-residue chain is Lipid-A-disaccharide synthase (375 aa).

Belongs to the LpxB family.

The catalysed reaction is a lipid X + a UDP-2-N,3-O-bis[(3R)-3-hydroxyacyl]-alpha-D-glucosamine = a lipid A disaccharide + UDP + H(+). Its pathway is bacterial outer membrane biogenesis; LPS lipid A biosynthesis. Functionally, condensation of UDP-2,3-diacylglucosamine and 2,3-diacylglucosamine-1-phosphate to form lipid A disaccharide, a precursor of lipid A, a phosphorylated glycolipid that anchors the lipopolysaccharide to the outer membrane of the cell. This chain is Lipid-A-disaccharide synthase, found in Pseudomonas entomophila (strain L48).